The following is a 260-amino-acid chain: Putative ABC transporter ATP-binding protein SCO3161 (260 aa).

The 231-residue stretch at 16 to 246 (LDVSGLAFAY…DDLMRAHRLE (231 aa)) folds into the ABC transporter domain. Residue 49–56 (GPNGAGKT) coordinates ATP.

It belongs to the ABC transporter superfamily.

It is found in the cell membrane. Probably part of an ABC transporter complex. Responsible for energy coupling to the transport system. This chain is Putative ABC transporter ATP-binding protein SCO3161, found in Streptomyces coelicolor (strain ATCC BAA-471 / A3(2) / M145).